The sequence spans 714 residues: Calpain-1 catalytic subunit (714 aa).

In terms of domain architecture, Calpain catalytic spans 55–354; it reads LFRDEAFPPV…FTRLEICNLT (300 aa). Ca(2+) is bound by residues Gln-109 and Asp-114. Active-site residues include Cys-115, His-272, and Asn-296. Ca(2+) is bound by residues Asp-318 and Asp-323. Residue Thr-354 is modified to Phosphothreonine. The segment at 355-526 is domain III; the sequence is PDALKSQRVR…KKAGTQELDD (172 aa). Residues 527–542 are linker; the sequence is QVQAILPDEQVLSEEE. A domain IV region spans residues 543–713; that stretch reads IDENFKALFR…LFKWLQLTMF (171 aa). EF-hand domains are found at residues 585 to 618, 615 to 650, and 680 to 714; these read FSLESCRSMVNLMDRDGNGKLGLVEFNILWNRIR, NRIRNYLSIFRKFDLDKSGSMSAYEMRMAIESAGFK, and VRLETMFRFFKTLDTDLDGVVTFDLFKWLQLTMFA. Residues Asp-598, Asp-600, Asn-602, Lys-604, Glu-609, Asp-628, Asp-630, Ser-632, Ser-634, and Glu-639 each contribute to the Ca(2+) site.

This sequence belongs to the peptidase C2 family. In terms of assembly, forms a heterodimer with a small (regulatory) subunit CAPNS1. It depends on Ca(2+) as a cofactor. Undergoes calcium-induced successive autoproteolytic cleavages that generate a membrane-bound 78 kDa active form and an intracellular 75 kDa active form. Calpastatin reduces with high efficiency the transition from 78 kDa to 75 kDa calpain forms.

It is found in the cytoplasm. Its subcellular location is the cell membrane. It carries out the reaction Broad endopeptidase specificity.. Activated by micromolar concentrations of calcium and inhibited by calpastatin. Its function is as follows. Calcium-regulated non-lysosomal thiol-protease which catalyzes limited proteolysis of substrates involved in cytoskeletal remodeling and signal transduction. Proteolytically cleaves CTBP1. Cleaves and activates caspase-7 (CASP7). This is Calpain-1 catalytic subunit from Sus scrofa (Pig).